Consider the following 156-residue polypeptide: E3 ubiquitin-protein ligase LAP (156 aa).

An RING-CH-type zinc finger spans residues 1–55 (MSDICWICNDVCDERNNFCGCNEEYKVVHIKCMQLWINYSKKKECNLCKTKYNIK). Residues 1-73 (MSDICWICND…WNWCFNDKKT (73 aa)) lie on the Cytoplasmic side of the membrane. Zn(2+) contacts are provided by cysteine 5, cysteine 8, cysteine 19, cysteine 21, histidine 29, cysteine 32, cysteine 45, and cysteine 48. A helical transmembrane segment spans residues 74–94 (TLFKIFFILFALVFIFLTITL). The Lumenal segment spans residues 95–111 (SNDMANLVTGINDLICS). The chain crosses the membrane as a helical span at residues 112–132 (IIFLIVYTVVMLTSICFSVFV). The Cytoplasmic portion of the chain corresponds to 133 to 156 (VAIVVDFLLEAKEKNSFLTIREIV).

It belongs to the poxviridae LAP protein family.

It localises to the host membrane. Its subcellular location is the host Golgi apparatus. The protein localises to the host trans-Golgi network membrane. It is found in the host early endosome membrane. The enzyme catalyses S-ubiquitinyl-[E2 ubiquitin-conjugating enzyme]-L-cysteine + [acceptor protein]-L-lysine = [E2 ubiquitin-conjugating enzyme]-L-cysteine + N(6)-ubiquitinyl-[acceptor protein]-L-lysine.. Its function is as follows. E3 ubiquitin-protein ligase which promotes ubiquitination and subsequent degradation of host MHC-I and CD4 molecules, presumably to prevent lysis of infected cells by cytotoxic T-lymphocytes and NK cell. Binds target molecules through transmembrane interaction. The result of this ubiquitination is the enhancement of the endocytosis of the target chain and the delivery to the lysosome, where it is proteolytically destroyed. The polypeptide is E3 ubiquitin-protein ligase LAP (Yaba-like disease virus (YLDV)).